We begin with the raw amino-acid sequence, 101 residues long: Small ribosomal subunit protein bS18c (101 aa).

Residues 1–19 show a composition bias toward basic residues; it reads MDKSKRPFRKSKRSFRRRL. Disordered regions lie at residues 1–23 and 82–101; these read MDKSKRPFRKSKRSFRRRLPPIG and KQFERTESTPRTAGPKTRNK.

This sequence belongs to the bacterial ribosomal protein bS18 family. Part of the 30S ribosomal subunit.

Its subcellular location is the plastid. It localises to the chloroplast. This is Small ribosomal subunit protein bS18c from Drimys granadensis.